Reading from the N-terminus, the 157-residue chain is ATP synthase subunit b (157 aa).

A helical transmembrane segment spans residues 7–29; it reads MFGQLIMFTMFTWFCMKFVWPPI.

Belongs to the ATPase B chain family. F-type ATPases have 2 components, F(1) - the catalytic core - and F(0) - the membrane proton channel. F(1) has five subunits: alpha(3), beta(3), gamma(1), delta(1), epsilon(1). F(0) has three main subunits: a(1), b(2) and c(10-14). The alpha and beta chains form an alternating ring which encloses part of the gamma chain. F(1) is attached to F(0) by a central stalk formed by the gamma and epsilon chains, while a peripheral stalk is formed by the delta and b chains.

It is found in the cell inner membrane. Functionally, f(1)F(0) ATP synthase produces ATP from ADP in the presence of a proton or sodium gradient. F-type ATPases consist of two structural domains, F(1) containing the extramembraneous catalytic core and F(0) containing the membrane proton channel, linked together by a central stalk and a peripheral stalk. During catalysis, ATP synthesis in the catalytic domain of F(1) is coupled via a rotary mechanism of the central stalk subunits to proton translocation. In terms of biological role, component of the F(0) channel, it forms part of the peripheral stalk, linking F(1) to F(0). The protein is ATP synthase subunit b of Ruthia magnifica subsp. Calyptogena magnifica.